A 346-amino-acid polypeptide reads, in one-letter code: Glucose-6-phosphatase 3 (346 aa).

The Lumenal segment spans residues 1–24; sequence MESTLGAGIAMAEALQNQLPWLEN. The chain crosses the membrane as a helical span at residues 25–45; it reads VWLWVTFLGDPKSLFLFYFPA. Residues 46–54 lie on the Cytoplasmic side of the membrane; it reads AYYASRRVG. The chain crosses the membrane as a helical span at residues 55–75; the sequence is IAVLWISLITEWLNLVFKWFL. Residues 76-108 are Lumenal-facing; sequence FGDRPFWWVHESGYYSQAPAQVHQFPSSCETGP. Arg-79 serves as a coordination point for substrate. A helical membrane pass occupies residues 109 to 129; that stretch reads GSPSGHCMITGAALWPIMTAV. Residue His-114 is the Proton donor of the active site. Residues 130-140 lie on the Cytoplasmic side of the membrane; sequence SSQMATRAHSR. A helical membrane pass occupies residues 141–162; sequence WVRVIPSLAYCTFLLAVGLSRV. Arg-161 serves as a coordination point for substrate. Topologically, residues 163-167 are lumenal; sequence FLLAH. His-167 (nucleophile) is an active-site residue. A helical transmembrane segment spans residues 168-186; it reads FPHQVLAGLITGAVLGWLM. Topologically, residues 187 to 197 are cytoplasmic; sequence TPQVPMERELS. Residues 198–218 form a helical membrane-spanning segment; that stretch reads FYGLTSLALLLGASLIYWTLF. Residues 219–254 lie on the Lumenal side of the membrane; sequence TLGLDLSWSINLASKWCERPEWVHLDSRPFASLSRD. The chain crosses the membrane as a helical span at residues 255 to 273; that stretch reads SGAALGLGIALHSPCYAQV. Topologically, residues 274–283 are cytoplasmic; that stretch reads RRAHLGYGQK. A helical transmembrane segment spans residues 284-304; sequence LVCLVLAMGLLGPLNWLGYPP. Over 305 to 307 the chain is Lumenal; it reads QIS. Residues 308-328 traverse the membrane as a helical segment; it reads LFYIFNFLKYTLWPCLVLALV. At 329–346 the chain is on the cytoplasmic side; sequence PWLVHMFSAQEAPPIRSS.

It belongs to the glucose-6-phosphatase family.

It localises to the endoplasmic reticulum membrane. It carries out the reaction D-glucose 6-phosphate + H2O = D-glucose + phosphate. The protein operates within carbohydrate biosynthesis; gluconeogenesis. Its activity is regulated as follows. Inhibited by vanadate. In terms of biological role, hydrolyzes glucose-6-phosphate to glucose in the endoplasmic reticulum. May form with the glucose-6-phosphate transporter (SLC37A4/G6PT) a ubiquitously expressed complex responsible for glucose production through glycogenolysis and gluconeogenesis. Probably required for normal neutrophil function. This Bos taurus (Bovine) protein is Glucose-6-phosphatase 3 (G6PC3).